Reading from the N-terminus, the 415-residue chain is Methylthioribose-1-phosphate isomerase (415 aa).

Aspartate 284 acts as the Proton donor in catalysis.

The protein belongs to the eIF-2B alpha/beta/delta subunits family. MtnA subfamily.

The protein resides in the cytoplasm. It localises to the nucleus. The catalysed reaction is 5-(methylsulfanyl)-alpha-D-ribose 1-phosphate = 5-(methylsulfanyl)-D-ribulose 1-phosphate. The protein operates within amino-acid biosynthesis; L-methionine biosynthesis via salvage pathway; L-methionine from S-methyl-5-thio-alpha-D-ribose 1-phosphate: step 1/6. Its function is as follows. Catalyzes the interconversion of methylthioribose-1-phosphate (MTR-1-P) into methylthioribulose-1-phosphate (MTRu-1-P). The sequence is that of Methylthioribose-1-phosphate isomerase from Vanderwaltozyma polyspora (strain ATCC 22028 / DSM 70294 / BCRC 21397 / CBS 2163 / NBRC 10782 / NRRL Y-8283 / UCD 57-17) (Kluyveromyces polysporus).